Consider the following 855-residue polypeptide: Inactive rhomboid protein 1 (855 aa).

Residues 1-35 (MSEARRDSTSSLQRKKPPWLKLDIPSAAPATAEEP) form a disordered region. Topologically, residues 1–411 (MSEARRDSTS…HRPFFTYWLT (411 aa)) are cytoplasmic. The segment covering 25–35 (PSAAPATAEEP) has biased composition (low complexity). 2 positions are modified to phosphoserine: Ser76 and Ser176. Phosphothreonine occurs at positions 180 and 183. Ser390 is modified (phosphoserine). A helical transmembrane segment spans residues 412–432 (FVHSLVTILAVCIYGIAPVGF). Over 433–655 (SQHETVDSVL…NPEVPDQFYR (223 aa)) the chain is Lumenal. Asn583 carries N-linked (GlcNAc...) asparagine glycosylation. A helical transmembrane segment spans residues 656-676 (LWLSLFLHAGILHCLVSICFQ). Over 677–691 (MTVLRDLEKLAGWHR) the chain is Cytoplasmic. A helical transmembrane segment spans residues 692–712 (IAIIYLLSGVTGNLASAIFLP). Residues 713-714 (YR) are Lumenal-facing. A helical membrane pass occupies residues 715–735 (AEVGPAGSQFGILACLFVELF). The Cytoplasmic segment spans residues 736 to 746 (QSWQILARPWR). Residues 747–767 (AFFKLLAVVLFLFTFGLLPWI) form a helical membrane-spanning segment. Residues 768-772 (DNFAH) lie on the Lumenal side of the membrane. A helical transmembrane segment spans residues 773–793 (ISGFISGLFLSFAFLPYISFG). Residues 794–803 (KFDLYRKRCQ) are Cytoplasmic-facing. A helical transmembrane segment spans residues 804–824 (IIVFQVVFLGLLAGLVVLFYV). The Lumenal portion of the chain corresponds to 825–855 (YPVRCEWCEFLTCIPFTDKFCEKYELDAQLH).

It belongs to the peptidase S54 family. As to quaternary structure, homodimer, or homooligomer. Interacts with TGFA and HBEGF. Interacts with EGF; may retain EGF in the endoplasmic reticulum and regulates its degradation through the endoplasmic reticulum-associated degradation (ERAD). Interacts (via cytoplasmic N-terminus) with FRMD8/iTAP; this interaction leads to mutual protein stabilization. Interacts with ADAM17/TACE.

The protein resides in the endoplasmic reticulum membrane. Its subcellular location is the golgi apparatus membrane. Functionally, regulates ADAM17 protease, a sheddase of the epidermal growth factor (EGF) receptor ligands and TNF, thereby plays a role in sleep, cell survival, proliferation, migration and inflammation. Does not exhibit any protease activity on its own. This is Inactive rhomboid protein 1 (RHBDF1) from Callithrix jacchus (White-tufted-ear marmoset).